The chain runs to 205 residues: Large ribosomal subunit protein uL4 (205 aa).

The disordered stretch occupies residues Arg-45–Tyr-97. Over residues Gly-60–Gly-71 the composition is skewed to basic residues.

Belongs to the universal ribosomal protein uL4 family. Part of the 50S ribosomal subunit.

In terms of biological role, one of the primary rRNA binding proteins, this protein initially binds near the 5'-end of the 23S rRNA. It is important during the early stages of 50S assembly. It makes multiple contacts with different domains of the 23S rRNA in the assembled 50S subunit and ribosome. Functionally, forms part of the polypeptide exit tunnel. In Lactobacillus johnsonii (strain CNCM I-12250 / La1 / NCC 533), this protein is Large ribosomal subunit protein uL4.